Consider the following 197-residue polypeptide: dITP/XTP pyrophosphatase (197 aa).

Residue threonine 8–lysine 13 participates in substrate binding. Mg(2+)-binding residues include glutamate 40 and aspartate 69. The active-site Proton acceptor is the aspartate 69. Substrate contacts are provided by residues serine 70, phenylalanine 154–aspartate 157, lysine 177, and histidine 182–arginine 183.

The protein belongs to the HAM1 NTPase family. Homodimer. The cofactor is Mg(2+).

The enzyme catalyses XTP + H2O = XMP + diphosphate + H(+). It catalyses the reaction dITP + H2O = dIMP + diphosphate + H(+). It carries out the reaction ITP + H2O = IMP + diphosphate + H(+). Pyrophosphatase that catalyzes the hydrolysis of nucleoside triphosphates to their monophosphate derivatives, with a high preference for the non-canonical purine nucleotides XTP (xanthosine triphosphate), dITP (deoxyinosine triphosphate) and ITP. Seems to function as a house-cleaning enzyme that removes non-canonical purine nucleotides from the nucleotide pool, thus preventing their incorporation into DNA/RNA and avoiding chromosomal lesions. This is dITP/XTP pyrophosphatase (rdgB) from Shigella flexneri.